The sequence spans 212 residues: Prolactin-3C1 (212 aa).

A signal peptide spans 1–29; it reads MQLSLTQARTWKGLFLLVSCMFLWVYVTA. Residues Cys-80 and Cys-188 are joined by a disulfide bond. An N-linked (GlcNAc...) asparagine glycan is attached at Asn-100.

Belongs to the somatotropin/prolactin family. As to expression, expressed exclusively in decidua.

The protein localises to the secreted. This is Prolactin-3C1 (Prl3c1) from Mus musculus (Mouse).